Here is a 464-residue protein sequence, read N- to C-terminus: MPDNNVGRVVQVIGPVIDIKFDSDCLPNIYNAIEIDMGDRILITEVEQHIGDDVVRTIAMESTEGLKRGMKAVNTEKPISVPVGSEILGRLFNVLGKTIDEEGEFKAEEYYPIHRPAPTFEEQSVEPEMFETGIKVIDLIAPYQKGGKIGLFGGAGVGKTVLIQELINNIAKEHGGLSVFTGVGERTREGNDLYYEMKESGVINKTALVFGQMNEPPGARMRVALTGLTMAEYFRDQGQNVLLFIDNIFRFTQAGSEVSALLGRIPSAVGYQPTLATEMGALQERITSTKHGSITSVQAVYVPADDLTDPAPATTFAHLDATTVLSRSIAELGIYPAVDPLESTSRILDPRVIGQEHYDVAINVKHILERYKELQDIIAILGVDELSEEDKLVVSRARKVQRFLSQPFTVAEQFTGMKGKFVPVKETVRGFKEIIEGKYDDVPEAAFLFVGSIEEALEKAKTMS.

153-160 (GGAGVGKT) is a binding site for ATP.

The protein belongs to the ATPase alpha/beta chains family. In terms of assembly, F-type ATPases have 2 components, CF(1) - the catalytic core - and CF(0) - the membrane proton channel. CF(1) has five subunits: alpha(3), beta(3), gamma(1), delta(1), epsilon(1). CF(0) has three main subunits: a(1), b(2) and c(9-12). The alpha and beta chains form an alternating ring which encloses part of the gamma chain. CF(1) is attached to CF(0) by a central stalk formed by the gamma and epsilon chains, while a peripheral stalk is formed by the delta and b chains.

Its subcellular location is the cell membrane. It catalyses the reaction ATP + H2O + 4 H(+)(in) = ADP + phosphate + 5 H(+)(out). In terms of biological role, produces ATP from ADP in the presence of a proton gradient across the membrane. The catalytic sites are hosted primarily by the beta subunits. The protein is ATP synthase subunit beta of Clostridium novyi (strain NT).